We begin with the raw amino-acid sequence, 299 residues long: Release factor glutamine methyltransferase (299 aa).

Residues 134-138 (GTGSG), aspartate 157, tryptophan 186, and asparagine 203 contribute to the S-adenosyl-L-methionine site. A substrate-binding site is contributed by 203–206 (NPPY).

Belongs to the protein N5-glutamine methyltransferase family. PrmC subfamily.

It catalyses the reaction L-glutaminyl-[peptide chain release factor] + S-adenosyl-L-methionine = N(5)-methyl-L-glutaminyl-[peptide chain release factor] + S-adenosyl-L-homocysteine + H(+). Its function is as follows. Methylates the class 1 translation termination release factors RF1/PrfA and RF2/PrfB on the glutamine residue of the universally conserved GGQ motif. This chain is Release factor glutamine methyltransferase, found in Synechocystis sp. (strain ATCC 27184 / PCC 6803 / Kazusa).